A 472-amino-acid chain; its full sequence is ATP synthase subunit beta (472 aa).

157–164 (GGAGVGKT) contacts ATP.

The protein belongs to the ATPase alpha/beta chains family. As to quaternary structure, F-type ATPases have 2 components, CF(1) - the catalytic core - and CF(0) - the membrane proton channel. CF(1) has five subunits: alpha(3), beta(3), gamma(1), delta(1), epsilon(1). CF(0) has three main subunits: a(1), b(2) and c(9-12). The alpha and beta chains form an alternating ring which encloses part of the gamma chain. CF(1) is attached to CF(0) by a central stalk formed by the gamma and epsilon chains, while a peripheral stalk is formed by the delta and b chains.

The protein localises to the cell membrane. It catalyses the reaction ATP + H2O + 4 H(+)(in) = ADP + phosphate + 5 H(+)(out). Its function is as follows. Produces ATP from ADP in the presence of a proton gradient across the membrane. The catalytic sites are hosted primarily by the beta subunits. The sequence is that of ATP synthase subunit beta from Desulforudis audaxviator (strain MP104C).